The sequence spans 114 residues: MAVILLPQVERWFFALNRDAMASVTGAIDLLEMEGPTLGRPVVDKVNDSTFHNMKELRPAGTSIRILFAFDPARQAILLLGGDKAGNWKRWYDNNIPIADQRSENWLASEHGGG.

It belongs to the mycobacterial HigB family.

Functionally, putative toxic component of a type II toxin-antitoxin (TA) system. Its cognate antitoxin would be HigA3. Not toxic upon expression in M.smegmatis. This Mycobacterium tuberculosis (strain ATCC 25618 / H37Rv) protein is Putative toxin HigB3.